Consider the following 198-residue polypeptide: GTP-binding protein Di-Ras1 (198 aa).

Residues 17–22, 33–39, 61–65, 121–125, Ala151, and 151–152 each bind GTP; these read GVGKSS, RDTYIPT, DTTGS, NKCDE, and AK. The short motif at 36-44 is the Effector region element; that stretch reads YIPTIEDTY. Cys195 carries the post-translational modification Cysteine methyl ester. Cys195 is lipidated: S-geranylgeranyl cysteine. The propeptide at 196–198 is removed in mature form; it reads ALM.

This sequence belongs to the small GTPase superfamily. Di-Ras family.

The protein localises to the cell membrane. Its function is as follows. Displays low GTPase activity and exists predominantly in the GTP-bound form. The chain is GTP-binding protein Di-Ras1 (Diras1) from Mus musculus (Mouse).